The following is a 502-amino-acid chain: Cardiolipin synthase (502 aa).

A run of 3 helical transmembrane segments spans residues 7-27, 29-49, and 59-79; these read VIIFVLAVAAFLFLTNDYWEG, LLGGLSILISCSVVFIAFVIS, and ITWLVVLGSFPLIGFFFYLMF. PLD phosphodiesterase domains lie at 237 to 264 and 415 to 442; these read INFRNHRKIIVIDGTIGFVGGLNIGDEY and SKGFLHSKIMIVDGELASIGTANMDMRS. Active-site residues include His242, Lys244, Asp249, His420, Lys422, and Asp427.

This sequence belongs to the phospholipase D family. Cardiolipin synthase subfamily.

It is found in the cell membrane. The catalysed reaction is 2 a 1,2-diacyl-sn-glycero-3-phospho-(1'-sn-glycerol) = a cardiolipin + glycerol. In terms of biological role, catalyzes the reversible phosphatidyl group transfer from one phosphatidylglycerol molecule to another to form cardiolipin (CL) (diphosphatidylglycerol) and glycerol. The sequence is that of Cardiolipin synthase (cls) from Geobacillus sp. (strain WCH70).